A 213-amino-acid polypeptide reads, in one-letter code: Major fimbrial subunit (213 aa).

Residues 1–20 (MKKTLLGSLILLAFAGNVQA) form the signal peptide. An intrachain disulfide couples C41 to C81.

Belongs to the fimbrial protein family.

It is found in the fimbrium. Functionally, mediates adherence to oropharyngeal epithelial cells. Helps the airway colonization process. The sequence is that of Major fimbrial subunit (hifA) from Haemophilus influenzae.